The chain runs to 356 residues: Glucose-1-phosphate thymidylyltransferase (356 aa).

Residues aspartate 107 and aspartate 221 each coordinate Mg(2+).

It belongs to the glucose-1-phosphate thymidylyltransferase family. It depends on Mg(2+) as a cofactor.

It catalyses the reaction dTTP + alpha-D-glucose 1-phosphate + H(+) = dTDP-alpha-D-glucose + diphosphate. It functions in the pathway antibiotic biosynthesis. Its function is as follows. Involved in the biosynthesis of the two 2,6-deoxysugars, dTDP-L-oleandrose and dTDP-D-desosamine, attached to the macrolactone ring oleandolide to produce the aglycone antibiotic oleandomycin. Catalyzes the formation of dTDP-glucose from deoxythymidine triphosphate (dTTP) and glucose 1-phosphate. The sequence is that of Glucose-1-phosphate thymidylyltransferase from Streptomyces antibioticus.